A 533-amino-acid polypeptide reads, in one-letter code: MEIAKEKSGAKPEFIDNEDESLRESIVIFDFGSQYSLLIARRIREMHVYCELVSHDTPWEKIAHLNPRGFILSGGPSSVYEAGAPLAPAYIFESKLPVLGICYGMQAITHQLGGVVEHSEKREYGHALLHSSVANSDLLSDMPEPSPVWMSHGDRIEKMPAGFTALAYTENCPVAVMGNEADIYGLQFHPEVVHSPNGKIILKNFVFNICKCHANWTMGNYIQESIHNIREQVGDGQVICALSGGVDSAVVASLIHKAIGDQLTCIYVNNGLLRREEADRTLHVFKNHMGMKIIYVDAVDRFLDSLSGVTDPEQKRKVIGSEFIKVFEDEACKLGKIDFLAQGTLYPDVIESVSSVSKASAKIKSHHNVGGLPAHMKLKLIEPLRYLFKDEVRLLGKELGLPDEMIWRQPFPGPGLAIRIIGEVTREKLEILRAADWIVMSEIKKAKMYHQVWQSFAILTDVKSVGVMGDFRTYGYLVAIRAVTSEDAMTADWAKLPYDLLSVISNRIVNEVKEVNRVVYDISSKPPSTIEWE.

In terms of domain architecture, Glutamine amidotransferase type-1 spans 25-215 (SIVIFDFGSQ…VFNICKCHAN (191 aa)). Cys102 functions as the Nucleophile in the catalytic mechanism. Residues His189 and Glu191 contribute to the active site. The 193-residue stretch at 216 to 408 (WTMGNYIQES…LGLPDEMIWR (193 aa)) folds into the GMPS ATP-PPase domain. Residue 243 to 249 (SGGVDSA) participates in ATP binding.

In terms of assembly, homodimer.

The enzyme catalyses XMP + L-glutamine + ATP + H2O = GMP + L-glutamate + AMP + diphosphate + 2 H(+). Its pathway is purine metabolism; GMP biosynthesis; GMP from XMP (L-Gln route): step 1/1. Catalyzes the synthesis of GMP from XMP. The sequence is that of GMP synthase [glutamine-hydrolyzing] from Dehalococcoides mccartyi (strain ATCC BAA-2266 / KCTC 15142 / 195) (Dehalococcoides ethenogenes (strain 195)).